Here is a 1070-residue protein sequence, read N- to C-terminus: MASTISTNPAHAHFESFLQAQLCQDVLSSFQGLCGALGVEPGGGLSQYHKVKAQLNYWNAKSLWAKLDKRASQPVYQQGRACTGTKCLVVGAGPCGLRAAVELAMLGARVVLVEKRTKFSRHNVLHLWPFTIHDLRALGAKKFYGRFCTGSLDHISIRQLQLLLLKVALLLGVEIHWGITFTGLQPPPKKGSGWRAQLQPSPPAQLAKYEFDVLISAAGGKFVPEGFTVREMRGKLAIGITANFVNGRTVEETQVPEISGVARIYNQSFFQSLLKATGIDLENIVYYKDDTHYFVMTAKKQCLLRLGVLHKDWPDTERLLGSANVVPEALQRFARAAADFATHGKLGKLEFARDAHGRPDVSAFDFTSMMRAESSARVQERHGTRLLLGLVGDCLVEPFWPLGTGVARGFLAAFDAAWMVKRWAEGAGPLEVLAERESLYQLLSQTSPENMHRNVAQYGLDPATRYPNLNLRAVTPSQVRDLYDMEAKEPVQRMSDETDSGKAATGAVGSQEELLRWCQEQTAGYPGVHVTDLSSSWADGLALCALVHRLRPALLEPSELQGMGALEATSWALKMAEHELGITPVLSAQAMVAGSDPLGLIAYLSHFHSAFKSVPHNPGSVSQGSPGTASAVLFLGKLQRTLQRTRTQENGEDAGGKKPRLEVKAETPSTEEPPVPKPDEPMTPPSQQQDASAEDLCALCGQHLYILERLCADGRFFHRSCFRCHICEATLWPGGYRQHPGDGYLYCLQHLPQTGHEEDSSDRGPESQDLPMSSENNTPSGPATPVDLHQGTSPVPNPIQPTRRLIRLSSPERQRLSSLHLTPDPEMEPPPKPPRSCSTLAHQALEASFKGWGMPVQSPQVLEAMEMGEEERSSSSEEETEEEEDVPLDSDMEHFLRNLAENSGTMNNYPTWRRTLLRRAKEEEMKRFCKAQAIQRRLNEIEAALRELEARGTELELALRSQSSSPEKQKALWVEQLLQLVQKKNSLVAEEAELMITVQELNLEEKQWQLDQELRTYMNREETLKTAADRQAEDQVLRKLLDVVNQRDALIRLQEERRLSELASEPGVQG.

Residues 1–489 (MASTISTNPA…RDLYDMEAKE (489 aa)) are monooxygenase domain. FAD is bound by residues cysteine 95, 114 to 116 (EKR), 121 to 123 (RHN), phenylalanine 181, tyrosine 293, and aspartate 393. Threonine 475 carries the post-translational modification Phosphothreonine. The Calponin-homology (CH) domain maps to 508-612 (VGSQEELLRW…YLSHFHSAFK (105 aa)). The tract at residues 643-690 (QRTRTQENGEDAGGKKPRLEVKAETPSTEEPPVPKPDEPMTPPSQQQD) is disordered. Positions 646–665 (RTQENGEDAGGKKPRLEVKA) are enriched in basic and acidic residues. Positions 671-684 (EEPPVPKPDEPMTP) are enriched in pro residues. One can recognise an LIM zinc-binding domain in the interval 695–757 (DLCALCGQHL…LQHLPQTGHE (63 aa)). Residues cysteine 697, cysteine 700, histidine 718, cysteine 721, cysteine 724, cysteine 727, cysteine 747, and histidine 750 each contribute to the Zn(2+) site. Disordered stretches follow at residues 754 to 838 (TGHE…RSCS) and 865 to 887 (MEMG…EDVP). A compositionally biased stretch (basic and acidic residues) spans 755 to 766 (GHEEDSSDRGPE). Over residues 770–781 (LPMSSENNTPSG) the composition is skewed to polar residues. A phosphoserine mark is found at serine 793, serine 875, and serine 876. A compositionally biased stretch (acidic residues) spans 876-887 (SEEETEEEEDVP). The interval 904–1070 (GTMNNYPTWR…ELASEPGVQG (167 aa)) is important for interaction with RAB8A. In terms of domain architecture, bMERB spans 921–1070 (KEEEMKRFCK…ELASEPGVQG (150 aa)). Residues 928 to 1030 (FCKAQAIQRR…EETLKTAADR (103 aa)) are a coiled coil. Serine 1060 carries the phosphoserine modification.

It belongs to the Mical family. As to quaternary structure, interacts with STK38 and STK38L. Associates with the SH3 domain of NEDD9. Interacts with VIM and PLXNA3. Interacts with RAB1B, RAB8A, RAB10, RAB13 and RAB15 (in their GTP-bound forms); binding to RAB1B is of low affinity compared to other Rab proteins; at least in case of RAB8A and RAB10 can bind 2 molecules of the Rab proteins simultaneously. Interacts with GRAF1/ARHGAP26, GRAF2/ARHGAP10, RAB8A, RAB8B and RAB10; may bind simultaneously to GRAFs and Rabs and connects GRAFs to Rabs. Does not interact with RAB1 and RAB11A. Requires FAD as cofactor.

It is found in the cytoplasm. The protein resides in the cytoskeleton. Its subcellular location is the endosome membrane. It localises to the midbody. The enzyme catalyses L-methionyl-[F-actin] + NADPH + O2 + H(+) = L-methionyl-(R)-S-oxide-[F-actin] + NADP(+) + H2O. It catalyses the reaction NADPH + O2 + H(+) = H2O2 + NADP(+). Monooxygenase that promotes depolymerization of F-actin by mediating oxidation of specific methionine residues on actin to form methionine-sulfoxide, resulting in actin filament disassembly and preventing repolymerization. In the absence of actin, it also functions as a NADPH oxidase producing H(2)O(2). Acts as a cytoskeletal regulator that connects NEDD9 to intermediate filaments. Also acts as a negative regulator of apoptosis via its interaction with STK38 and STK38L; acts by antagonizing STK38 and STK38L activation by MST1/STK4. Involved in regulation of lamina-specific connectivity in the nervous system such as the development of lamina-restricted hippocampal connections. Through redox regulation of the actin cytoskeleton controls the intracellular distribution of secretory vesicles containing L1/neurofascin/NgCAM family proteins in neurons, thereby regulating their cell surface levels. May act as Rab effector protein and play a role in vesicle trafficking. Promotes endosomal tubule extension by associating with RAB8 (RAB8A or RAB8B), RAB10 and GRAF (GRAF1/ARHGAP26 or GRAF2/ARHGAP10) on the endosomal membrane which may connect GRAFs to Rabs, thereby participating in neosynthesized Rab8-Rab10-Rab11-dependent protein export. This chain is [F-actin]-monooxygenase MICAL1 (MICAL1), found in Bos taurus (Bovine).